Consider the following 294-residue polypeptide: Golgi to ER traffic protein 2 (294 aa).

Residues M1 to D104 form a disordered region. The Cytoplasmic portion of the chain corresponds to M1–N166. The span at K12–K21 shows a compositional bias: basic residues. Over residues I34–D65 the composition is skewed to polar residues. The segment covering K85–Q95 has biased composition (basic and acidic residues). Residues L167–L187 traverse the membrane as a helical segment. At T188–N205 the chain is on the lumenal side. A helical membrane pass occupies residues F206 to L225. Over Q226–D272 the chain is Cytoplasmic. A helical membrane pass occupies residues V273–L293. A topological domain (lumenal) is located at residue I294.

This sequence belongs to the GET2 family. Component of the Golgi to ER traffic (GET) complex, which is composed of GET1, GET2 and GET3. Within the complex, GET1 and GET2 form a heterotetramer which is stabilized by phosphatidylinositol binding and which binds to the GET3 homodimer.

The protein localises to the endoplasmic reticulum membrane. It localises to the golgi apparatus membrane. Required for the post-translational delivery of tail-anchored (TA) proteins to the endoplasmic reticulum. Together with GET1, acts as a membrane receptor for soluble GET3, which recognizes and selectively binds the transmembrane domain of TA proteins in the cytosol. The GET complex cooperates with the HDEL receptor ERD2 to mediate the ATP-dependent retrieval of resident ER proteins that contain a C-terminal H-D-E-L retention signal from the Golgi to the ER. In Vanderwaltozyma polyspora (strain ATCC 22028 / DSM 70294 / BCRC 21397 / CBS 2163 / NBRC 10782 / NRRL Y-8283 / UCD 57-17) (Kluyveromyces polysporus), this protein is Golgi to ER traffic protein 2.